A 215-amino-acid chain; its full sequence is Large ribosomal subunit protein uL3 (215 aa).

Glutamine 156 is subject to N5-methylglutamine.

The protein belongs to the universal ribosomal protein uL3 family. Part of the 50S ribosomal subunit. Forms a cluster with proteins L14 and L19. Methylated by PrmB.

In terms of biological role, one of the primary rRNA binding proteins, it binds directly near the 3'-end of the 23S rRNA, where it nucleates assembly of the 50S subunit. This Xylella fastidiosa (strain 9a5c) protein is Large ribosomal subunit protein uL3.